A 122-amino-acid polypeptide reads, in one-letter code: MIQMQTNLEVADNSGARRVMCIKVLGGAGRRYASVGDVIVVSVKEAIPRGRVKKGDVLRAVVVRVNQNLKRKDGSVIRFDKNAAVIVNKQSEPVGTRIFGPVPRELRAKNHMKIISLAPEVL.

Belongs to the universal ribosomal protein uL14 family. In terms of assembly, part of the 50S ribosomal subunit. Forms a cluster with proteins L3 and L19. In the 70S ribosome, L14 and L19 interact and together make contacts with the 16S rRNA in bridges B5 and B8.

In terms of biological role, binds to 23S rRNA. Forms part of two intersubunit bridges in the 70S ribosome. This chain is Large ribosomal subunit protein uL14, found in Caulobacter vibrioides (strain ATCC 19089 / CIP 103742 / CB 15) (Caulobacter crescentus).